The chain runs to 563 residues: Arginine--tRNA ligase (563 aa).

Residues 121–131 (PNIAKPMSMGH) carry the 'HIGH' region motif.

It belongs to the class-I aminoacyl-tRNA synthetase family. In terms of assembly, monomer.

Its subcellular location is the cytoplasm. It catalyses the reaction tRNA(Arg) + L-arginine + ATP = L-arginyl-tRNA(Arg) + AMP + diphosphate. The chain is Arginine--tRNA ligase from Leuconostoc mesenteroides subsp. mesenteroides (strain ATCC 8293 / DSM 20343 / BCRC 11652 / CCM 1803 / JCM 6124 / NCDO 523 / NBRC 100496 / NCIMB 8023 / NCTC 12954 / NRRL B-1118 / 37Y).